A 382-amino-acid chain; its full sequence is Inactive ubiquitin-specific protease 5 (382 aa).

A DUSP domain is found at 16 to 141 (VPAEEERALI…GGPTLPRKAI (126 aa)). Positions 323-382 (TGLLNLGNTCFMNSAIQCLVHTPEFARYFREDYHREINWQNPLGMVVSTLSTSMALKPYV) constitute a USP domain.

This sequence belongs to the peptidase C19 family. As to expression, widely expressed with the highest expression in floral organs.

It localises to the cell membrane. Functionally, plays an important role in the development of floral organs and chloroplasts. Does not possess deubiquitinating enzyme activity in vitro. In Oryza sativa subsp. japonica (Rice), this protein is Inactive ubiquitin-specific protease 5.